The sequence spans 223 residues: Phosphoribosylformylglycinamidine synthase subunit PurQ (223 aa).

The Glutamine amidotransferase type-1 domain maps to 3–223 (SAVILLPGLN…LFAGALGITA (221 aa)). Cys-87 functions as the Nucleophile in the catalytic mechanism. Catalysis depends on residues His-197 and Glu-199.

As to quaternary structure, part of the FGAM synthase complex composed of 1 PurL, 1 PurQ and 2 PurS subunits.

It is found in the cytoplasm. It catalyses the reaction N(2)-formyl-N(1)-(5-phospho-beta-D-ribosyl)glycinamide + L-glutamine + ATP + H2O = 2-formamido-N(1)-(5-O-phospho-beta-D-ribosyl)acetamidine + L-glutamate + ADP + phosphate + H(+). It carries out the reaction L-glutamine + H2O = L-glutamate + NH4(+). It functions in the pathway purine metabolism; IMP biosynthesis via de novo pathway; 5-amino-1-(5-phospho-D-ribosyl)imidazole from N(2)-formyl-N(1)-(5-phospho-D-ribosyl)glycinamide: step 1/2. In terms of biological role, part of the phosphoribosylformylglycinamidine synthase complex involved in the purines biosynthetic pathway. Catalyzes the ATP-dependent conversion of formylglycinamide ribonucleotide (FGAR) and glutamine to yield formylglycinamidine ribonucleotide (FGAM) and glutamate. The FGAM synthase complex is composed of three subunits. PurQ produces an ammonia molecule by converting glutamine to glutamate. PurL transfers the ammonia molecule to FGAR to form FGAM in an ATP-dependent manner. PurS interacts with PurQ and PurL and is thought to assist in the transfer of the ammonia molecule from PurQ to PurL. This is Phosphoribosylformylglycinamidine synthase subunit PurQ from Brucella abortus biovar 1 (strain 9-941).